A 109-amino-acid chain; its full sequence is Cell division protein ZapA (109 aa).

Positions 21 to 99 form a coiled coil; the sequence is PEQRDALNQA…IEQALLEQGR (79 aa).

The protein belongs to the ZapA family. Type 1 subfamily. In terms of assembly, homodimer. Interacts with FtsZ.

The protein resides in the cytoplasm. Functionally, activator of cell division through the inhibition of FtsZ GTPase activity, therefore promoting FtsZ assembly into bundles of protofilaments necessary for the formation of the division Z ring. It is recruited early at mid-cell but it is not essential for cell division. This Cronobacter sakazakii (strain ATCC BAA-894) (Enterobacter sakazakii) protein is Cell division protein ZapA.